The primary structure comprises 229 residues: Coiled-coil domain-containing protein 134 (229 aa).

A signal peptide spans methionine 1–glycine 22. An N-linked (GlcNAc...) asparagine glycan is attached at asparagine 148. The tract at residues phenylalanine 182–leucine 229 is disordered. Positions phenylalanine 196–lysine 218 form a coiled coil. The Prevents secretion from ER signature appears at glutamine 226–leucine 229.

The protein belongs to the CCDC134 family. As to quaternary structure, interacts with TADA2A. Associates with the PCAF complex via TADA2A binding. O-glycosylated, with additional sialic acid modifications.

The protein localises to the endoplasmic reticulum lumen. It is found in the secreted. It localises to the cytoplasm. The protein resides in the nucleus. In terms of biological role, molecular adapter required to prevent protein hyperglycosylation of HSP90B1: during translation, associates with nascent HSP90B1 and the STT3A catalytic component of the OST-A complex and tethers them to a specialized translocon that forms a microenvironment for HSP90B1 folding. In the CCDC134-containing translocon, STT3A associates with the SRT pseudosubstrate motif of HSP90B1, preventing access to facultative glycosylation sites until folding is completed, preventing hyperglycosylation and subsequent degradation of HSP90B1. In extracellular secreted form, promotes proliferation and activation of CD8(+) T-cells, suggesting a cytokine-like function. May inhibit ERK and JNK signaling activity. May suppress cell migration and invasion activity, via its effects on ERK and JNK signaling. May also localize in the nucleus: enhances stability of the PCAF histone acetyltransferase (HAT) complex member TADA2A and thus promotes PCAF-mediated histone acetyltransferase activity. Has a critical role in the regulation of osteogenesis and bone development. In Mus musculus (Mouse), this protein is Coiled-coil domain-containing protein 134 (Ccdc134).